We begin with the raw amino-acid sequence, 201 residues long: Arachin 25 kDa protein (201 aa).

In terms of assembly, this is one of six apparently different protein chains that constitute the peanut protein arachin.

In Arachis hypogaea (Peanut), this protein is Arachin 25 kDa protein.